The primary structure comprises 319 residues: MQASLIAFMISLVLSALLFPWLIIWMRSHDEGQQIRDEGPKWHEKKSGTPTMGGTVFVLSAAVATVAICAYKGQLSKTVWILLVALLGYGIIGFLDDGLKLFFKRNLGLRAWQKMDLQLLVAAGIVLLAASDNFDFALYLPFAGVVKNVVLFTLFEVFWLVGFSNAVNLSDGLDGLATGLSFIAYGTYAWLAFKSQNFGVLVFCMAVMGGLAAFFMFNHKPAKIFMGDAGSLALGGGLAAVSIFLGRPWSLLLVGIVFVCETASVILQVASFKTTGKRIFKMTPIHHHFEMLGWSEWKVDLVFWLVGLVGSGIYLMIWG.

9 consecutive transmembrane segments (helical) span residues 5-25, 51-71, 79-99, 119-139, 149-169, 173-193, 197-217, 224-246, and 299-319; these read LIAF…LIIW, TMGG…ICAY, VWIL…DDGL, LLVA…FALY, VVLF…AVNL, LDGL…WLAF, NFGV…FFMF, IFMG…IFLG, and VDLV…MIWG.

It belongs to the glycosyltransferase 4 family. MraY subfamily. Requires Mg(2+) as cofactor.

It is found in the cell membrane. The catalysed reaction is UDP-N-acetyl-alpha-D-muramoyl-L-alanyl-gamma-D-glutamyl-L-lysyl-D-alanyl-D-alanine + di-trans,octa-cis-undecaprenyl phosphate = Mur2Ac(oyl-L-Ala-gamma-D-Glu-L-Lys-D-Ala-D-Ala)-di-trans,octa-cis-undecaprenyl diphosphate + UMP. It functions in the pathway cell wall biogenesis; peptidoglycan biosynthesis. In terms of biological role, catalyzes the initial step of the lipid cycle reactions in the biosynthesis of the cell wall peptidoglycan: transfers peptidoglycan precursor phospho-MurNAc-pentapeptide from UDP-MurNAc-pentapeptide onto the lipid carrier undecaprenyl phosphate, yielding undecaprenyl-pyrophosphoryl-MurNAc-pentapeptide, known as lipid I. This is Phospho-N-acetylmuramoyl-pentapeptide-transferase from Lactobacillus delbrueckii subsp. bulgaricus (strain ATCC BAA-365 / Lb-18).